The following is a 335-amino-acid chain: Eukaryotic translation initiation factor 3 subunit I (335 aa).

WD repeat units follow at residues 8-47 (GHER…RLGT), 50-91 (GHQG…KVWD), 145-184 (CTES…QLEN), 189-228 (EFDN…ILKT), and 286-325 (GHFG…FDFM).

The protein belongs to the eIF-3 subunit I family. As to quaternary structure, component of the eukaryotic translation initiation factor 3 (eIF-3) complex.

Its subcellular location is the cytoplasm. In terms of biological role, component of the eukaryotic translation initiation factor 3 (eIF-3) complex, which is involved in protein synthesis of a specialized repertoire of mRNAs and, together with other initiation factors, stimulates binding of mRNA and methionyl-tRNAi to the 40S ribosome. The eIF-3 complex specifically targets and initiates translation of a subset of mRNAs involved in cell proliferation. This is Eukaryotic translation initiation factor 3 subunit I (tif34) from Aspergillus oryzae (strain ATCC 42149 / RIB 40) (Yellow koji mold).